Consider the following 413-residue polypeptide: NAD-dependent dihydropyrimidine dehydrogenase subunit PreT homolog (413 aa).

Glutamate 287 contacts NAD(+).

The protein belongs to the NADH dehydrogenase family. Heterotetramer of 2 PreA and 2 PreT subunits.

It catalyses the reaction 5,6-dihydrouracil + NAD(+) = uracil + NADH + H(+). The enzyme catalyses 5,6-dihydrothymine + NAD(+) = thymine + NADH + H(+). Its function is as follows. Involved in pyrimidine base degradation. Catalyzes physiologically the reduction of uracil to 5,6-dihydrouracil (DHU) by using NADH as a specific cosubstrate. It also catalyzes the reverse reaction and the reduction of thymine to 5,6-dihydrothymine (DHT). In Salmonella typhi, this protein is NAD-dependent dihydropyrimidine dehydrogenase subunit PreT homolog (preT).